A 272-amino-acid chain; its full sequence is Cell division protein ZipA (272 aa).

At 1-4 (METH) the chain is on the periplasmic side. Residues 5-25 (ILFFILAGLLIAVLIGYSIWS) form a helical membrane-spanning segment. Residues 26 to 272 (ARREKSRIFS…RQNYLLRVAN (247 aa)) are Cytoplasmic-facing.

This sequence belongs to the ZipA family. In terms of assembly, interacts with FtsZ via their C-terminal domains.

The protein localises to the cell inner membrane. Essential cell division protein that stabilizes the FtsZ protofilaments by cross-linking them and that serves as a cytoplasmic membrane anchor for the Z ring. Also required for the recruitment to the septal ring of downstream cell division proteins. This Glaesserella parasuis serovar 5 (strain SH0165) (Haemophilus parasuis) protein is Cell division protein ZipA.